The sequence spans 279 residues: Ribonuclease T2 protein rnst-2 (279 aa).

Residues 1–17 (MKLLLLLCISCIPLAYS) form the signal peptide. Cys37 and Cys48 are disulfide-bonded. His60 is a catalytic residue. Asn68 is a glycosylation site (N-linked (GlcNAc...) asparagine). Active-site residues include Glu114 and His118. Residues Cys200 and Cys210 are joined by a disulfide bond.

Belongs to the RNase T2 family. In terms of tissue distribution, expressed in the pharynx, hypodermis, muscle cells, sheath cells, intestinal cells, the vulva and tail regions.

It localises to the lysosome. It catalyses the reaction a ribonucleotidyl-ribonucleotide-RNA + H2O = a 3'-end 3'-phospho-ribonucleotide-RNA + a 5'-end dephospho-ribonucleoside-RNA + H(+). In terms of biological role, probable endoribonuclease involved in the autophagy-mediated degradation of ribosomal RNA and ribosomal proteins in lysosomes. The chain is Ribonuclease T2 protein rnst-2 from Caenorhabditis elegans.